Consider the following 265-residue polypeptide: UPF0354 protein GTNG_2723 (265 aa).

Belongs to the UPF0354 family.

In Geobacillus thermodenitrificans (strain NG80-2), this protein is UPF0354 protein GTNG_2723.